The following is a 496-amino-acid chain: Gasdermin-E (496 aa).

The tract at residues 1-56 is membrane targeting domain; that stretch reads MFAKATRNFLREVDADGDLIAVSNLNDSDKLQLLSLVTKKKRFWCWQRPKYQFLSL. Cys45 is modified (S-(2-succinyl)cysteine). A Glycyl lysine isopeptide (Lys-Gly) (interchain with G-Cter in ubiquitin) cross-link involves residue Lys120. Residues Cys156, Cys168, and Cys180 each carry the S-(2-succinyl)cysteine modification. A Glycyl lysine isopeptide (Lys-Gly) (interchain with G-Cter in ubiquitin) cross-link involves residue Lys189. Residues Cys235, Cys371, Cys408, Cys417, and Cys489 each carry the S-(2-succinyl)cysteine modification.

Belongs to the gasdermin family. Homooligomer; homooligomeric ring-shaped pore complex containing 27-28 subunits when inserted in the membrane. In terms of processing, cleavage at Asp-270 by CASP3 (mature and uncleaved precursor forms) or granzyme B (GZMB) relieves autoinhibition and is sufficient to initiate pyroptosis. Succination by the Krebs cycle intermediate fumarate, which leads to S-(2-succinyl)cysteine residues, inhibits processing by caspases, and ability to initiate pyroptosis. Succination modification is catalyzed by a non-enzymatic reaction caused by an accumulation of fumarate. Post-translationally, ubiquitinated at Lys-120 and Lys-189 via 'Lys-48'-linked polyubiquitin chains, leading to proteasomal degradation. Deubiquitinated by USP48, leading to increased stability. In terms of processing, palmitoylated. In terms of tissue distribution, expressed in cochlea. Low level of expression in heart, brain, placenta, lung, liver, skeletal muscle, kidney and pancreas, with highest expression in placenta.

The protein resides in the cell membrane. Its subcellular location is the cytoplasm. The protein localises to the cytosol. The full-length protein before cleavage is inactive: intramolecular interactions between N- and C-terminal domains mediate autoinhibition in the absence of activation signal. The intrinsic pyroptosis-inducing activity is carried by the released N-terminal moiety (Gasdermin-E, N-terminal) following cleavage by CASP3 or granzyme B (GZMB). Activated by NLRP1 in the absence of GSDMD expression: NLRP1 cleaves and activates CASP8, promoting downstream activation of CASP3 and subsequent activation of GSDME. With respect to regulation, (Microbial infection) Activated upon human coronavirus SARS-CoV-2 infection, leading to lung epithelial cell death. Activation takes place in response to (1) activation of NLRP1 and (2) inactivation of GSDMD following NLRP1 and GSDMD cleavage by the SARS-CoV-2 3C-like proteinase nsp5. Functionally, precursor of a pore-forming protein that converts non-inflammatory apoptosis to pyroptosis. This form constitutes the precursor of the pore-forming protein: upon cleavage, the released N-terminal moiety (Gasdermin-E, N-terminal) binds to membranes and forms pores, triggering pyroptosis. Its function is as follows. Pore-forming protein produced by cleavage by CASP3 or granzyme B (GZMB), which converts non-inflammatory apoptosis to pyroptosis or promotes granzyme-mediated pyroptosis, respectively. After cleavage, moves to the plasma membrane, homooligomerizes within the membrane and forms pores of 10-15 nanometers (nm) of inner diameter, allowing the release of mature interleukins (IL1B and IL16) and triggering pyroptosis. Binds to inner leaflet lipids, bisphosphorylated phosphatidylinositols, such as phosphatidylinositol (4,5)-bisphosphate. Cleavage by CASP3 switches CASP3-mediated apoptosis induced by TNF or danger signals, such as chemotherapy drugs, to pyroptosis. Mediates secondary necrosis downstream of the mitochondrial apoptotic pathway and CASP3 activation as well as in response to viral agents. Exhibits bactericidal activity. Cleavage by GZMB promotes tumor suppressor activity by triggering robust anti-tumor immunity. Suppresses tumors by mediating granzyme-mediated pyroptosis in target cells of natural killer (NK) cells: cleavage by granzyme B (GZMB), delivered to target cells from NK-cells, triggers pyroptosis of tumor cells and tumor suppression. May play a role in the p53/TP53-regulated cellular response to DNA damage. (Microbial infection) Pore-forming protein, which promotes maternal placental pyroptosis in response to Zika virus infection, contributing to adverse fetal outcomes. In Homo sapiens (Human), this protein is Gasdermin-E.